A 258-amino-acid polypeptide reads, in one-letter code: MSESRTSADGGMETSYGFREVPGGEKQGLVNQVFHKVAKRYDIMNDVMSMGMHRAWKDAMIAALNPRKEPGYKVLDVAGGTGDIAFRIVEASGRQAHATVLDINGSMLGVGAERAEKKKLSGNLTFVEANAEELPFEAASFDAYTIAFGIRNVPRIDKALSEAYRVLKRGGRLLVLEFSEVDMPLLDKIYDAWSFNAIPQFGKAITGDAEPYQYLVESIRKFPNQENFAAMIRQAGFSRVTYTNYTGGIAALHSGWKL.

Positions 1–20 (MSESRTSADGGMETSYGFRE) are disordered. Residues threonine 81, aspartate 102, and 130 to 131 (NA) contribute to the S-adenosyl-L-methionine site.

Belongs to the class I-like SAM-binding methyltransferase superfamily. MenG/UbiE family.

The catalysed reaction is a 2-demethylmenaquinol + S-adenosyl-L-methionine = a menaquinol + S-adenosyl-L-homocysteine + H(+). The enzyme catalyses a 2-methoxy-6-(all-trans-polyprenyl)benzene-1,4-diol + S-adenosyl-L-methionine = a 5-methoxy-2-methyl-3-(all-trans-polyprenyl)benzene-1,4-diol + S-adenosyl-L-homocysteine + H(+). The protein operates within quinol/quinone metabolism; menaquinone biosynthesis; menaquinol from 1,4-dihydroxy-2-naphthoate: step 2/2. It functions in the pathway cofactor biosynthesis; ubiquinone biosynthesis. Methyltransferase required for the conversion of demethylmenaquinol (DMKH2) to menaquinol (MKH2) and the conversion of 2-polyprenyl-6-methoxy-1,4-benzoquinol (DDMQH2) to 2-polyprenyl-3-methyl-6-methoxy-1,4-benzoquinol (DMQH2). In Rhizobium etli (strain ATCC 51251 / DSM 11541 / JCM 21823 / NBRC 15573 / CFN 42), this protein is Ubiquinone/menaquinone biosynthesis C-methyltransferase UbiE.